Reading from the N-terminus, the 95-residue chain is Large ribosomal subunit protein uL23 (95 aa).

It belongs to the universal ribosomal protein uL23 family. Part of the 50S ribosomal subunit. Contacts protein L29, and trigger factor when it is bound to the ribosome.

In terms of biological role, one of the early assembly proteins it binds 23S rRNA. One of the proteins that surrounds the polypeptide exit tunnel on the outside of the ribosome. Forms the main docking site for trigger factor binding to the ribosome. The polypeptide is Large ribosomal subunit protein uL23 (Syntrophotalea carbinolica (strain DSM 2380 / NBRC 103641 / GraBd1) (Pelobacter carbinolicus)).